The primary structure comprises 616 residues: Chaperone protein HscA (616 aa).

The protein belongs to the heat shock protein 70 family.

Functionally, chaperone involved in the maturation of iron-sulfur cluster-containing proteins. Has a low intrinsic ATPase activity which is markedly stimulated by HscB. Involved in the maturation of IscU. In Escherichia coli O17:K52:H18 (strain UMN026 / ExPEC), this protein is Chaperone protein HscA.